Here is a 352-residue protein sequence, read N- to C-terminus: Glycerol-1-phosphate dehydrogenase [NAD(P)+] (352 aa).

NAD(+) is bound by residues 98 to 102 and 120 to 123; these read GKPID and TAAS. Residue Asp-125 participates in substrate binding. Position 129 (Ser-129) interacts with NAD(+). Residue Asp-172 participates in substrate binding. Zn(2+) is bound by residues Asp-172 and His-252. Substrate is bound at residue His-256. His-268 contributes to the Zn(2+) binding site.

The protein belongs to the glycerol-1-phosphate dehydrogenase family. The cofactor is Zn(2+).

It localises to the cytoplasm. It catalyses the reaction sn-glycerol 1-phosphate + NAD(+) = dihydroxyacetone phosphate + NADH + H(+). The catalysed reaction is sn-glycerol 1-phosphate + NADP(+) = dihydroxyacetone phosphate + NADPH + H(+). It participates in membrane lipid metabolism; glycerophospholipid metabolism. Functionally, catalyzes the NAD(P)H-dependent reduction of dihydroxyacetonephosphate (DHAP or glycerone phosphate) to glycerol 1-phosphate (G1P). The G1P thus generated is used as the glycerophosphate backbone of phospholipids in the cellular membranes of Archaea. The protein is Glycerol-1-phosphate dehydrogenase [NAD(P)+] of Natronomonas pharaonis (strain ATCC 35678 / DSM 2160 / CIP 103997 / JCM 8858 / NBRC 14720 / NCIMB 2260 / Gabara) (Halobacterium pharaonis).